Here is a 565-residue protein sequence, read N- to C-terminus: MARPKNVKHIFVTGGVISSLGKGILSASLGMLLKSRGLKVAIQKYDPYINVDPGTMSPYQHGEVYVTDDGAETDLDLGHYERFLDESTTQSSNLTMGRVYKSVIDKERRGEYLGATVQVVPHVIDEIKDRMAEQAKNGDLDVLITEIGGTIGDIESLPFLEAMRQMKLEMGDSNLLNIHLTFVPYIKAASELKTKPTQHSVKMLLGVGIQPDILVCRSEKPLSREIKNKVGHFCNVNELDVIGLNDCDTIYEVPLMLLKEKLDLRVLKKLGLKKYKEPTLDYWRDFCNKVKFPQDGEVTIGICGKYTEYPDAYKSIIESFIHAGASNNVKVNVKLLRAEDAELNAFDFAKELEGINGILVAPGFGDRGIEGKIKYIQYAREHNVPFLGICLGMQCASIEFARNVCGLQDANSTEFNKRTRFPVIDLMAHQKKVKEKGGTMRLGSYPCIISEGSKAYAVYHKFLINERHRHRYEFNNAYRKNFEESGMVFSGTSPNGELVEIIELKNHRWFVAVQFHPELKSRVQKVHPVFHGFVAAAKEYAHGVHQMDLVVEMPSLVPVLTEPTQ.

The amidoligase domain stretch occupies residues 1-272; sequence MARPKNVKHI…DLRVLKKLGL (272 aa). A CTP-binding site is contributed by Ser-18. Ser-18 contacts UTP. 19–24 is an ATP binding site; the sequence is SLGKGI. Tyr-59 is an L-glutamine binding site. ATP is bound at residue Asp-76. Mg(2+) contacts are provided by Asp-76 and Glu-146. CTP is bound by residues 153–155, 193–198, and Lys-229; these read DIE and KTKPTQ. UTP-binding positions include 193 to 198 and Lys-229; that span reads KTKPTQ. One can recognise a Glutamine amidotransferase type-1 domain in the interval 299–543; that stretch reads TIGICGKYTE…VAAAKEYAHG (245 aa). Residue Gly-363 coordinates L-glutamine. The active-site Nucleophile; for glutamine hydrolysis is the Cys-390. L-glutamine is bound by residues 391–394, Glu-414, and Arg-471; that span reads LGMQ. Residues His-516 and Glu-518 contribute to the active site.

It belongs to the CTP synthase family. As to quaternary structure, homotetramer.

The catalysed reaction is UTP + L-glutamine + ATP + H2O = CTP + L-glutamate + ADP + phosphate + 2 H(+). It catalyses the reaction L-glutamine + H2O = L-glutamate + NH4(+). It carries out the reaction UTP + NH4(+) + ATP = CTP + ADP + phosphate + 2 H(+). It functions in the pathway pyrimidine metabolism; CTP biosynthesis via de novo pathway; CTP from UDP: step 2/2. Allosterically activated by GTP, when glutamine is the substrate; GTP has no effect on the reaction when ammonia is the substrate. The allosteric effector GTP functions by stabilizing the protein conformation that binds the tetrahedral intermediate(s) formed during glutamine hydrolysis. Inhibited by the product CTP, via allosteric rather than competitive inhibition. In terms of biological role, catalyzes the ATP-dependent amination of UTP to CTP with either L-glutamine or ammonia as the source of nitrogen. Regulates intracellular CTP levels through interactions with the four ribonucleotide triphosphates. The polypeptide is CTP synthase (Pelodictyon phaeoclathratiforme (strain DSM 5477 / BU-1)).